Consider the following 126-residue polypeptide: Profilin (126 aa).

This sequence belongs to the profilin family. In terms of assembly, occurs in many kinds of cells as a complex with monomeric actin in a 1:1 ratio.

Its subcellular location is the cytoplasm. It localises to the cytoskeleton. In terms of biological role, binds to actin and affects the structure of the cytoskeleton. At high concentrations, profilin prevents the polymerization of actin, whereas it enhances it at low concentrations. By binding to PIP2, it inhibits the formation of IP3 and DG. This is Profilin from Branchiostoma belcheri (Amphioxus).